The primary structure comprises 132 residues: L-ectoine synthase (132 aa).

The protein belongs to the ectoine synthase family.

It catalyses the reaction (2S)-4-acetamido-2-aminobutanoate = L-ectoine + H2O. It participates in amine and polyamine biosynthesis; ectoine biosynthesis; L-ectoine from L-aspartate 4-semialdehyde: step 3/3. Catalyzes the circularization of gamma-N-acetyl-alpha,gamma-diaminobutyric acid (ADABA) to ectoine (1,4,5,6-tetrahydro-2-methyl-4-pyrimidine carboxylic acid), which is an excellent osmoprotectant. The polypeptide is L-ectoine synthase (Hahella chejuensis (strain KCTC 2396)).